The chain runs to 75 residues: U6-lycotoxin-Ls1d (75 aa).

The first 21 residues, 1–21, serve as a signal peptide directing secretion; sequence MKLLFFTALVLVVISLIEVEA. Residues 22–25 constitute a propeptide that is removed on maturation; that stretch reads ENER.

Belongs to the neurotoxin 19 (CSTX) family. 06 (U6-Lctx) subfamily. In terms of processing, contains 4 disulfide bonds. In terms of tissue distribution, expressed by the venom gland.

Its subcellular location is the secreted. This is U6-lycotoxin-Ls1d from Lycosa singoriensis (Wolf spider).